We begin with the raw amino-acid sequence, 499 residues long: Apolipoprotein N-acyltransferase (499 aa).

6 consecutive transmembrane segments (helical) span residues 9 to 29 (LLLG…PALL), 50 to 70 (LGYI…SIGV), 77 to 97 (FWWA…FFVS), 114 to 134 (FIFC…FTGL), 148 to 168 (ILIQ…VIYI), and 183 to 203 (LKVL…YGSV). The CN hydrolase domain maps to 220-464 (VQPSIPQTEK…DGLIPKKLDS (245 aa)). The Proton acceptor role is filled by E259. Residue K322 is part of the active site. C372 (nucleophile) is an active-site residue. A helical membrane pass occupies residues 466 to 486 (TIFSKFGNITILLIVFFIFLV).

Belongs to the CN hydrolase family. Apolipoprotein N-acyltransferase subfamily.

The protein localises to the cell inner membrane. The catalysed reaction is N-terminal S-1,2-diacyl-sn-glyceryl-L-cysteinyl-[lipoprotein] + a glycerophospholipid = N-acyl-S-1,2-diacyl-sn-glyceryl-L-cysteinyl-[lipoprotein] + a 2-acyl-sn-glycero-3-phospholipid + H(+). The protein operates within protein modification; lipoprotein biosynthesis (N-acyl transfer). Catalyzes the phospholipid dependent N-acylation of the N-terminal cysteine of apolipoprotein, the last step in lipoprotein maturation. This is Apolipoprotein N-acyltransferase from Rickettsia bellii (strain RML369-C).